Reading from the N-terminus, the 354-residue chain is Holliday junction branch migration complex subunit RuvB (354 aa).

A large ATPase domain (RuvB-L) region spans residues 4–190; it reads TDKLAAERII…FGIVARLEFY (187 aa). ATP contacts are provided by residues L29, R30, G71, K74, T75, T76, 137 to 139, R180, Y190, and R227; that span reads EDY. Residue T75 coordinates Mg(2+). The small ATPAse domain (RuvB-S) stretch occupies residues 191 to 261; that stretch reads NAEELARIVT…VADAALKMLD (71 aa). A head domain (RuvB-H) region spans residues 264–354; that stretch reads AVGFDLMDRK…LPGLWDSAAT (91 aa). DNA contacts are provided by R300, R319, and R324.

It belongs to the RuvB family. Homohexamer. Forms an RuvA(8)-RuvB(12)-Holliday junction (HJ) complex. HJ DNA is sandwiched between 2 RuvA tetramers; dsDNA enters through RuvA and exits via RuvB. An RuvB hexamer assembles on each DNA strand where it exits the tetramer. Each RuvB hexamer is contacted by two RuvA subunits (via domain III) on 2 adjacent RuvB subunits; this complex drives branch migration. In the full resolvosome a probable DNA-RuvA(4)-RuvB(12)-RuvC(2) complex forms which resolves the HJ.

It localises to the cytoplasm. It catalyses the reaction ATP + H2O = ADP + phosphate + H(+). The RuvA-RuvB-RuvC complex processes Holliday junction (HJ) DNA during genetic recombination and DNA repair, while the RuvA-RuvB complex plays an important role in the rescue of blocked DNA replication forks via replication fork reversal (RFR). RuvA specifically binds to HJ cruciform DNA, conferring on it an open structure. The RuvB hexamer acts as an ATP-dependent pump, pulling dsDNA into and through the RuvAB complex. RuvB forms 2 homohexamers on either side of HJ DNA bound by 1 or 2 RuvA tetramers; 4 subunits per hexamer contact DNA at a time. Coordinated motions by a converter formed by DNA-disengaged RuvB subunits stimulates ATP hydrolysis and nucleotide exchange. Immobilization of the converter enables RuvB to convert the ATP-contained energy into a lever motion, pulling 2 nucleotides of DNA out of the RuvA tetramer per ATP hydrolyzed, thus driving DNA branch migration. The RuvB motors rotate together with the DNA substrate, which together with the progressing nucleotide cycle form the mechanistic basis for DNA recombination by continuous HJ branch migration. Branch migration allows RuvC to scan DNA until it finds its consensus sequence, where it cleaves and resolves cruciform DNA. This is Holliday junction branch migration complex subunit RuvB from Paraburkholderia phytofirmans (strain DSM 17436 / LMG 22146 / PsJN) (Burkholderia phytofirmans).